A 193-amino-acid polypeptide reads, in one-letter code: MKHYILFFISNILIENFILVKFLGLCPFLGASSNIETAFGMSCATTFVILTSSVLLWCVNFFILLPLDLIYLRIIAYMLIVSVSVQFLEIVLRKTSPILYRLLGIFLPLITTNCTVLAIPLFSLYEHHTFLESIFYGLSASLGFALVMIIFSCIRERIVLSDIPLPFQGAPIILITVSLISITFMGFKGLIKI.

Transmembrane regions (helical) follow at residues 5–25 (ILFF…FLGL), 47–67 (FVIL…LLPL), 72–92 (LRII…EIVL), 102–122 (LLGI…IPLF), 134–154 (IFYG…FSCI), and 167–187 (FQGA…FMGF).

This sequence belongs to the NqrDE/RnfAE family. As to quaternary structure, the complex is composed of six subunits: RnfA, RnfB, RnfC, RnfD, RnfE and RnfG.

It localises to the cell inner membrane. Its function is as follows. Part of a membrane-bound complex that couples electron transfer with translocation of ions across the membrane. In Buchnera aphidicola subsp. Acyrthosiphon pisum (strain APS) (Acyrthosiphon pisum symbiotic bacterium), this protein is Ion-translocating oxidoreductase complex subunit A.